Here is a 332-residue protein sequence, read N- to C-terminus: Glyceraldehyde-3-phosphate dehydrogenase (332 aa).

Residues 11-12 (RI), Asp-34, Arg-78, and Ser-120 contribute to the NAD(+) site. D-glyceraldehyde 3-phosphate contacts are provided by residues 151–153 (SCT), Thr-182, Arg-197, 210–211 (TG), and Arg-233. Cys-152 acts as the Nucleophile in catalysis. Asn-314 contributes to the NAD(+) binding site.

Belongs to the glyceraldehyde-3-phosphate dehydrogenase family. In terms of assembly, homotetramer.

Its subcellular location is the cytoplasm. The catalysed reaction is D-glyceraldehyde 3-phosphate + phosphate + NAD(+) = (2R)-3-phospho-glyceroyl phosphate + NADH + H(+). Its pathway is carbohydrate degradation; glycolysis; pyruvate from D-glyceraldehyde 3-phosphate: step 1/5. Functionally, catalyzes the oxidative phosphorylation of glyceraldehyde 3-phosphate (G3P) to 1,3-bisphosphoglycerate (BPG) using the cofactor NAD. The first reaction step involves the formation of a hemiacetal intermediate between G3P and a cysteine residue, and this hemiacetal intermediate is then oxidized to a thioester, with concomitant reduction of NAD to NADH. The reduced NADH is then exchanged with the second NAD, and the thioester is attacked by a nucleophilic inorganic phosphate to produce BPG. The protein is Glyceraldehyde-3-phosphate dehydrogenase (gap) of Kitasatospora aureofaciens (Streptomyces aureofaciens).